Consider the following 467-residue polypeptide: 3-isopropylmalate dehydratase large subunit (467 aa).

Positions 348, 409, and 412 each coordinate [4Fe-4S] cluster.

Belongs to the aconitase/IPM isomerase family. LeuC type 1 subfamily. In terms of assembly, heterodimer of LeuC and LeuD. [4Fe-4S] cluster serves as cofactor.

It carries out the reaction (2R,3S)-3-isopropylmalate = (2S)-2-isopropylmalate. Its pathway is amino-acid biosynthesis; L-leucine biosynthesis; L-leucine from 3-methyl-2-oxobutanoate: step 2/4. In terms of biological role, catalyzes the isomerization between 2-isopropylmalate and 3-isopropylmalate, via the formation of 2-isopropylmaleate. This is 3-isopropylmalate dehydratase large subunit from Magnetococcus marinus (strain ATCC BAA-1437 / JCM 17883 / MC-1).